A 172-amino-acid polypeptide reads, in one-letter code: Ribosome maturation factor RimM (172 aa).

The region spanning 95–168 (AEGEFYYHQI…RVDVEIMEGL (74 aa)) is the PRC barrel domain.

Belongs to the RimM family. As to quaternary structure, binds ribosomal protein uS19.

It is found in the cytoplasm. Functionally, an accessory protein needed during the final step in the assembly of 30S ribosomal subunit, possibly for assembly of the head region. Essential for efficient processing of 16S rRNA. May be needed both before and after RbfA during the maturation of 16S rRNA. It has affinity for free ribosomal 30S subunits but not for 70S ribosomes. This is Ribosome maturation factor RimM from Streptococcus equi subsp. zooepidemicus (strain MGCS10565).